A 90-amino-acid chain; its full sequence is Large ribosomal subunit protein bL31B (90 aa).

This sequence belongs to the bacterial ribosomal protein bL31 family. Type B subfamily. As to quaternary structure, part of the 50S ribosomal subunit.

This is Large ribosomal subunit protein bL31B from Pseudomonas fluorescens (strain SBW25).